A 187-amino-acid polypeptide reads, in one-letter code: Elongation factor P (187 aa).

Belongs to the elongation factor P family.

The protein localises to the cytoplasm. It participates in protein biosynthesis; polypeptide chain elongation. Involved in peptide bond synthesis. Stimulates efficient translation and peptide-bond synthesis on native or reconstituted 70S ribosomes in vitro. Probably functions indirectly by altering the affinity of the ribosome for aminoacyl-tRNA, thus increasing their reactivity as acceptors for peptidyl transferase. This Helicobacter pylori (strain P12) protein is Elongation factor P.